We begin with the raw amino-acid sequence, 338 residues long: Ornithine carbamoyltransferase (338 aa).

Carbamoyl phosphate-binding positions include Ser-56–Thr-59, Arg-107, and His-134–Gln-137. L-ornithine-binding positions include Asn-168, Asp-232, and Ser-236–Met-237. Carbamoyl phosphate contacts are provided by residues Cys-274–Leu-275 and Arg-320.

The protein belongs to the aspartate/ornithine carbamoyltransferase superfamily. OTCase family.

Its subcellular location is the cytoplasm. The enzyme catalyses carbamoyl phosphate + L-ornithine = L-citrulline + phosphate + H(+). Its pathway is amino-acid biosynthesis; L-arginine biosynthesis; L-arginine from L-ornithine and carbamoyl phosphate: step 1/3. Reversibly catalyzes the transfer of the carbamoyl group from carbamoyl phosphate (CP) to the N(epsilon) atom of ornithine (ORN) to produce L-citrulline. The protein is Ornithine carbamoyltransferase (argI) of Buchnera aphidicola subsp. Acyrthosiphon pisum (strain APS) (Acyrthosiphon pisum symbiotic bacterium).